The following is a 247-amino-acid chain: Carboxy-S-adenosyl-L-methionine synthase (247 aa).

S-adenosyl-L-methionine-binding positions include Tyr-39, 89–90 (DN), 117–118 (DI), Asn-132, and Arg-199.

The protein belongs to the class I-like SAM-binding methyltransferase superfamily. Cx-SAM synthase family. As to quaternary structure, homodimer.

It catalyses the reaction prephenate + S-adenosyl-L-methionine = carboxy-S-adenosyl-L-methionine + 3-phenylpyruvate + H2O. In terms of biological role, catalyzes the conversion of S-adenosyl-L-methionine (SAM) to carboxy-S-adenosyl-L-methionine (Cx-SAM). This chain is Carboxy-S-adenosyl-L-methionine synthase, found in Sodalis glossinidius (strain morsitans).